The primary structure comprises 439 residues: GTPase Der (439 aa).

2 EngA-type G domains span residues 2-166 and 176-351; these read SVVA…PAPA and TRLA…IEFN. GTP-binding positions include 8-15, 55-59, 118-121, 182-189, 229-233, and 294-297; these read GRPNVGKS, DTGGF, NKVD, DTAGI, and NKWD. Positions 352 to 436 constitute a KH-like domain; the sequence is RQVPTGVLNR…PIRLKFKDRN (85 aa).

Belongs to the TRAFAC class TrmE-Era-EngA-EngB-Septin-like GTPase superfamily. EngA (Der) GTPase family. In terms of assembly, associates with the 50S ribosomal subunit.

Its function is as follows. GTPase that plays an essential role in the late steps of ribosome biogenesis. This chain is GTPase Der, found in Syntrophotalea carbinolica (strain DSM 2380 / NBRC 103641 / GraBd1) (Pelobacter carbinolicus).